The primary structure comprises 956 residues: DNA polymerase I (956 aa).

The 5'-3' exonuclease domain occupies 209 to 296 (VTVRQWVDYR…VTDLPLDIEF (88 aa)).

The protein belongs to the DNA polymerase type-A family. In terms of assembly, single-chain monomer with multiple functions.

The catalysed reaction is DNA(n) + a 2'-deoxyribonucleoside 5'-triphosphate = DNA(n+1) + diphosphate. Functionally, a DNA polymerase, required for DNA repair after DNA damage induced by ionizing radiation (IR); this is not the major DNA polymerase. Following severe irradiation (7 kGy of gamma irradiation) genomic DNA is fragmented. DNA is progressively degraded for the first 1.5 hours after IR, in a step promoted by RecA and counterbalanced by DNA Pol I and Pol III, followed by massive DNA synthesis and genome reassembly in the next hour. Optimal priming of DNA synthesis requires both RecA and RadA, Pol III initiates DNA synthesis while both Pol I and Pol III are required for its continuation. May also have 5'-3' exonuclease activity. The sequence is that of DNA polymerase I (polA) from Deinococcus radiodurans (strain ATCC 13939 / DSM 20539 / JCM 16871 / CCUG 27074 / LMG 4051 / NBRC 15346 / NCIMB 9279 / VKM B-1422 / R1).